The chain runs to 284 residues: Signal peptidase I (284 aa).

The chain crosses the membrane as a helical span at residues 4–22 (NFPLLLVIAVAVCGLLALL). Topologically, residues 23–58 (DLVFFAPRRRSAIASYQGSVSQPDAVVIEKLNKEPL) are cytoplasmic. A helical transmembrane segment spans residues 59–77 (LVEYGKSFFPVLFIVLVLR). The Periplasmic segment spans residues 78–284 (SFLVEPFQIP…PNFSRVGLIK (207 aa)). Catalysis depends on residues S90 and K145.

This sequence belongs to the peptidase S26 family.

It is found in the cell inner membrane. The enzyme catalyses Cleavage of hydrophobic, N-terminal signal or leader sequences from secreted and periplasmic proteins.. The sequence is that of Signal peptidase I (lepB) from Pseudomonas fluorescens.